The following is an 879-amino-acid chain: Alanine--tRNA ligase (879 aa).

Positions 567, 571, 669, and 673 each coordinate Zn(2+).

This sequence belongs to the class-II aminoacyl-tRNA synthetase family. The cofactor is Zn(2+).

It localises to the cytoplasm. It catalyses the reaction tRNA(Ala) + L-alanine + ATP = L-alanyl-tRNA(Ala) + AMP + diphosphate. Functionally, catalyzes the attachment of alanine to tRNA(Ala) in a two-step reaction: alanine is first activated by ATP to form Ala-AMP and then transferred to the acceptor end of tRNA(Ala). Also edits incorrectly charged Ser-tRNA(Ala) and Gly-tRNA(Ala) via its editing domain. The sequence is that of Alanine--tRNA ligase from Lactobacillus acidophilus (strain ATCC 700396 / NCK56 / N2 / NCFM).